Reading from the N-terminus, the 185-residue chain is GTP cyclohydrolase 1 (185 aa).

Zn(2+)-binding residues include C76, H79, and C147.

It belongs to the GTP cyclohydrolase I family. Toroid-shaped homodecamer, composed of two pentamers of five dimers.

The enzyme catalyses GTP + H2O = 7,8-dihydroneopterin 3'-triphosphate + formate + H(+). The protein operates within cofactor biosynthesis; 7,8-dihydroneopterin triphosphate biosynthesis; 7,8-dihydroneopterin triphosphate from GTP: step 1/1. This is GTP cyclohydrolase 1 from Clostridium perfringens (strain ATCC 13124 / DSM 756 / JCM 1290 / NCIMB 6125 / NCTC 8237 / Type A).